A 569-amino-acid chain; its full sequence is Sulfite reductase [NADPH] hemoprotein beta-component (569 aa).

Residues cysteine 433, cysteine 439, cysteine 478, and cysteine 482 each coordinate [4Fe-4S] cluster. Cysteine 482 is a binding site for siroheme.

This sequence belongs to the nitrite and sulfite reductase 4Fe-4S domain family. Alpha(8)-beta(8). The alpha component is a flavoprotein, the beta component is a hemoprotein. It depends on siroheme as a cofactor. [4Fe-4S] cluster serves as cofactor.

The catalysed reaction is hydrogen sulfide + 3 NADP(+) + 3 H2O = sulfite + 3 NADPH + 4 H(+). It functions in the pathway sulfur metabolism; hydrogen sulfide biosynthesis; hydrogen sulfide from sulfite (NADPH route): step 1/1. Component of the sulfite reductase complex that catalyzes the 6-electron reduction of sulfite to sulfide. This is one of several activities required for the biosynthesis of L-cysteine from sulfate. The protein is Sulfite reductase [NADPH] hemoprotein beta-component of Pseudoalteromonas atlantica (strain T6c / ATCC BAA-1087).